We begin with the raw amino-acid sequence, 143 residues long: MAKKIVGFIKLQVPAGKANPSPPIGPALGQRGLNIMEFCKAFNAQTQGVEPGLPLPVVITAFADKSFTFVIKTPPATVLIKKAIKLDKGSSNALSTKVGKITRAQLEEIAKTKLKDMNAASVDAAVRTLAGSARSMGVTVEGL.

This sequence belongs to the universal ribosomal protein uL11 family. In terms of assembly, part of the ribosomal stalk of the 50S ribosomal subunit. Interacts with L10 and the large rRNA to form the base of the stalk. L10 forms an elongated spine to which L12 dimers bind in a sequential fashion forming a multimeric L10(L12)X complex. In terms of processing, one or more lysine residues are methylated.

Its function is as follows. Forms part of the ribosomal stalk which helps the ribosome interact with GTP-bound translation factors. The chain is Large ribosomal subunit protein uL11 from Acidovorax ebreus (strain TPSY) (Diaphorobacter sp. (strain TPSY)).